A 738-amino-acid chain; its full sequence is MKEAKVENIDFGNALSERYLAYALSTIMSRSLPDVRDGLKPVHRRLLYAMLQLRLEPNSGYKKCARVVGDVIGKYHPHGDVAVYDTLVRLAQHFSLRYPLIDGQGNFGSIDGDNAAAMRYTESRMTDICTLLMEDIDKDTVDFRPTYDGSDLEPVIMPASFPNLLANGSEGIAVGMATNIPPHNLHELCDALIHLINHPKAEINDIINFVKGPDFPTGGIIIDKAEVINAAYTTGRGSLRVRSRWEKEELSYGTYQIVVTEIPYQVQKSKLIEQIAILLKDKKIPLVSNIRDESTDIIRLVIEPRDRGCDPQIVMESLFKLTNLESRIQLNMNVIGSNNVPRVMNILEILQEFLYHRQNIVTRRSTYLLNKIKHRLEILKGLRIAYLNLDEIIKIIREEDEPKAIMMEWFKLTEIQVEAILNTRLRSLRKLEEQEIINEHSNLQKQQAILEEILNNPKELWKIVKKEIKTVQTKFGLNTVIGARRTSFEEVTLTNQVVDITAFITKEPITIICSKMGWVRSLKGHNTDLSTIKYKEGDAEKFILEAYTTDKILIVSSEGRFFTLLADNISKGKGTGESIKLLVDIGNNDITNILVYKPDQLLLLASSVGKGFLVNSNEVMAQTKTGKQIMNVPDGHVCIACLPVNGDSIACIGESRKLLVFNIDEIPEMKKGQGVTLQKFKNAKLLDIKIFNKEDGLGWNNNGKVKLEKNIVAFLGKRGSTGKLPPMGFPKNNRFSSY.

The 465-residue stretch at 32-496 (LPDVRDGLKP…SFEEVTLTNQ (465 aa)) folds into the Topo IIA-type catalytic domain. Tyr120 (O-(5'-phospho-DNA)-tyrosine intermediate) is an active-site residue.

This sequence belongs to the type II topoisomerase GyrA/ParC subunit family. ParC type 1 subfamily. Heterotetramer composed of ParC and ParE.

The protein localises to the cell membrane. The catalysed reaction is ATP-dependent breakage, passage and rejoining of double-stranded DNA.. In terms of biological role, topoisomerase IV is essential for chromosome segregation. It relaxes supercoiled DNA. Performs the decatenation events required during the replication of a circular DNA molecule. In Rickettsia conorii (strain ATCC VR-613 / Malish 7), this protein is DNA topoisomerase 4 subunit A.